Consider the following 122-residue polypeptide: MIQMQSYLGVADNSGAKEVMCIKVLGGSKRRYASIGDVIKVTVKEAIPRGKVKKGEVYDAVVVRTRSGVRRPDGSLIRFDGNAAVLLNNKQEPIGTRVFGPVTRELRSEKLMKIVSLAPEVL.

The protein belongs to the universal ribosomal protein uL14 family. Part of the 50S ribosomal subunit. Forms a cluster with proteins L3 and L19. In the 70S ribosome, L14 and L19 interact and together make contacts with the 16S rRNA in bridges B5 and B8.

In terms of biological role, binds to 23S rRNA. Forms part of two intersubunit bridges in the 70S ribosome. The protein is Large ribosomal subunit protein uL14 of Xylella fastidiosa (strain M23).